The following is a 438-amino-acid chain: MKIILILVLVLVVSINALNNQFLHISDVHYSSAMNSLLYNASVMCIGPTVTKEFDHKEHEDLIEDTERLNLPTNGLYGRYGCDTNQLLLSEVISEMLNVNSNPDFIIYTGDGAGHGLPNGPWSESQSTLAKSLYGAYPNTQFIPTIGNNDVFPDYNSQCNDSNLQFLYETWAQWIPTNQVSSFLYRGSFVVSPVSGLTIISLNTILYSVKNKNTFSTPQDPCGQFAWLEQQLIAAKQAGNSVYIIGHIFPGLDPFYLQGTWKSQYQTAFFNITSDYQTTITAGFFGHIHRDEIRSIQFDNPSLTNNHYFPMFIGSSITPVYFNNPTFKQFTYDSQSKNITDITAYFSDVYISNLKGHMNWTEEYDFVSIYDIDNQYGIGGDQLNSLMERMVSSNSIFNNYDNFRSGSYLSDSPSMTCLINAATIDELNACTYIAANVA.

The signal sequence occupies residues 1–17 (MKIILILVLVLVVSINA). Residues aspartate 27 and histidine 29 each contribute to the Zn(2+) site. Asparagine 40 carries N-linked (GlcNAc...) asparagine glycosylation. Zn(2+) is bound by residues aspartate 111 and asparagine 148. Asparagine 160 carries N-linked (GlcNAc...) asparagine glycosylation. Zn(2+) is bound at residue histidine 247. An N-linked (GlcNAc...) asparagine glycan is attached at asparagine 271. Zn(2+)-binding residues include histidine 287 and histidine 289. Asparagine 338 and asparagine 359 each carry an N-linked (GlcNAc...) asparagine glycan.

Belongs to the acid sphingomyelinase family. The cofactor is Zn(2+).

Its subcellular location is the secreted. In Dictyostelium discoideum (Social amoeba), this protein is Sphingomyelinase phosphodiesterase D (sgmD).